Reading from the N-terminus, the 195-residue chain is Nucleoside triphosphate pyrophosphatase (195 aa).

Residue Asp70 is the Proton acceptor of the active site.

The protein belongs to the Maf family. A divalent metal cation is required as a cofactor.

Its subcellular location is the cytoplasm. It carries out the reaction a ribonucleoside 5'-triphosphate + H2O = a ribonucleoside 5'-phosphate + diphosphate + H(+). The enzyme catalyses a 2'-deoxyribonucleoside 5'-triphosphate + H2O = a 2'-deoxyribonucleoside 5'-phosphate + diphosphate + H(+). Functionally, nucleoside triphosphate pyrophosphatase. May have a dual role in cell division arrest and in preventing the incorporation of modified nucleotides into cellular nucleic acids. The polypeptide is Nucleoside triphosphate pyrophosphatase (Cyanothece sp. (strain PCC 7425 / ATCC 29141)).